The following is a 427-amino-acid chain: UDP-N-acetylglucosamine 1-carboxyvinyltransferase (427 aa).

22–23 contributes to the phosphoenolpyruvate binding site; that stretch reads KN. UDP-N-acetyl-alpha-D-glucosamine is bound at residue arginine 92. The active-site Proton donor is aspartate 116. Aspartate 312 and methionine 334 together coordinate UDP-N-acetyl-alpha-D-glucosamine.

Belongs to the EPSP synthase family. MurA subfamily.

The protein localises to the cytoplasm. The enzyme catalyses phosphoenolpyruvate + UDP-N-acetyl-alpha-D-glucosamine = UDP-N-acetyl-3-O-(1-carboxyvinyl)-alpha-D-glucosamine + phosphate. Its pathway is cell wall biogenesis; peptidoglycan biosynthesis. Its function is as follows. Cell wall formation. Adds enolpyruvyl to UDP-N-acetylglucosamine. This chain is UDP-N-acetylglucosamine 1-carboxyvinyltransferase, found in Borreliella burgdorferi (strain ATCC 35210 / DSM 4680 / CIP 102532 / B31) (Borrelia burgdorferi).